Reading from the N-terminus, the 185-residue chain is Large ribosomal subunit protein uL5 (185 aa).

Belongs to the universal ribosomal protein uL5 family. In terms of assembly, part of the 50S ribosomal subunit; part of the 5S rRNA/L5/L18/L25 subcomplex. Contacts the 5S rRNA and the P site tRNA. Forms a bridge to the 30S subunit in the 70S ribosome.

Its function is as follows. This is one of the proteins that bind and probably mediate the attachment of the 5S RNA into the large ribosomal subunit, where it forms part of the central protuberance. In the 70S ribosome it contacts protein S13 of the 30S subunit (bridge B1b), connecting the 2 subunits; this bridge is implicated in subunit movement. Contacts the P site tRNA; the 5S rRNA and some of its associated proteins might help stabilize positioning of ribosome-bound tRNAs. In Brucella abortus (strain S19), this protein is Large ribosomal subunit protein uL5.